The primary structure comprises 364 residues: 4-hydroxy-3-methylbut-2-en-1-yl diphosphate synthase (flavodoxin) (364 aa).

Cysteine 268, cysteine 271, cysteine 303, and glutamate 310 together coordinate [4Fe-4S] cluster.

The protein belongs to the IspG family. [4Fe-4S] cluster is required as a cofactor.

The catalysed reaction is (2E)-4-hydroxy-3-methylbut-2-enyl diphosphate + oxidized [flavodoxin] + H2O + 2 H(+) = 2-C-methyl-D-erythritol 2,4-cyclic diphosphate + reduced [flavodoxin]. It functions in the pathway isoprenoid biosynthesis; isopentenyl diphosphate biosynthesis via DXP pathway; isopentenyl diphosphate from 1-deoxy-D-xylulose 5-phosphate: step 5/6. In terms of biological role, converts 2C-methyl-D-erythritol 2,4-cyclodiphosphate (ME-2,4cPP) into 1-hydroxy-2-methyl-2-(E)-butenyl 4-diphosphate. In Anoxybacillus flavithermus (strain DSM 21510 / WK1), this protein is 4-hydroxy-3-methylbut-2-en-1-yl diphosphate synthase (flavodoxin).